A 128-amino-acid polypeptide reads, in one-letter code: Sulfurtransferase TusD (128 aa).

Residue C78 is the Cysteine persulfide intermediate of the active site.

It belongs to the DsrE/TusD family. In terms of assembly, heterohexamer, formed by a dimer of trimers. The hexameric TusBCD complex contains 2 copies each of TusB, TusC and TusD. The TusBCD complex interacts with TusE.

The protein localises to the cytoplasm. Its function is as follows. Part of a sulfur-relay system required for 2-thiolation of 5-methylaminomethyl-2-thiouridine (mnm(5)s(2)U) at tRNA wobble positions. Accepts sulfur from TusA and transfers it in turn to TusE. In Erwinia tasmaniensis (strain DSM 17950 / CFBP 7177 / CIP 109463 / NCPPB 4357 / Et1/99), this protein is Sulfurtransferase TusD.